The chain runs to 170 residues: Protein GrpE (170 aa).

The interval 1-29 is disordered; that stretch reads MSEEIKNEEIVEEVEATEEVVETPEKSEL. Residues 10–22 show a composition bias toward acidic residues; it reads IVEEVEATEEVVE.

The protein belongs to the GrpE family. Homodimer.

It is found in the cytoplasm. Its function is as follows. Participates actively in the response to hyperosmotic and heat shock by preventing the aggregation of stress-denatured proteins, in association with DnaK and GrpE. It is the nucleotide exchange factor for DnaK and may function as a thermosensor. Unfolded proteins bind initially to DnaJ; upon interaction with the DnaJ-bound protein, DnaK hydrolyzes its bound ATP, resulting in the formation of a stable complex. GrpE releases ADP from DnaK; ATP binding to DnaK triggers the release of the substrate protein, thus completing the reaction cycle. Several rounds of ATP-dependent interactions between DnaJ, DnaK and GrpE are required for fully efficient folding. This Streptococcus suis (strain 98HAH33) protein is Protein GrpE.